The chain runs to 460 residues: Wadjet protein JetA (460 aa).

Its function is as follows. Component of antiplasmid transformation system Wadjet type I, composed of JetA, JetB, JetC and JetD. Expression of Wadjet type I in B.subtilis (strain BEST7003) reduces the transformation efficiency of plasmid pHCMC05. The protein is Wadjet protein JetA of Bacillus cereus (strain Q1).